The sequence spans 466 residues: Methylenomycin A resistance protein (466 aa).

Helical transmembrane passes span 16 to 36, 56 to 76, 83 to 103, 113 to 133, 146 to 166, 168 to 188, 203 to 223, 234 to 254, 276 to 296, 305 to 325, 337 to 357, 367 to 387, 409 to 429, and 434 to 454; these read ISVL…VTVV, WVVD…GALA, TIYI…AASI, LIQG…LAAS, LWAA…GVLV, LAGW…ALIS, VNII…YALI, VILV…LREI, FIGF…SLFL, FMAG…NLLF, LMFV…VLIS, VLMS…TTVI, IGAL…ATWY, and FAFL…WLFL.

Belongs to the major facilitator superfamily. EmrB family.

It is found in the cell membrane. Its function is as follows. Resistance to the epoxide antibiotic methylenomycin. The sequence is that of Methylenomycin A resistance protein (mmr) from Bacillus subtilis (strain 168).